Consider the following 109-residue polypeptide: Meiotically up-regulated gene 153 protein (109 aa).

It localises to the mitochondrion. Functionally, has a role in meiosis. This chain is Meiotically up-regulated gene 153 protein (mug153), found in Schizosaccharomyces pombe (strain 972 / ATCC 24843) (Fission yeast).